The chain runs to 75 residues: MMKLMLFSIIVILFSLIGSIHGADVPGNYPLDSSDDTYLCAPLGENPSCIQICRKHGVKYGYCYAFQCWCEYFGR.

A signal peptide spans 1–22; that stretch reads MMKLMLFSIIVILFSLIGSIHG. One can recognise an LCN-type CS-alpha/beta domain in the interval 25–75; it reads VPGNYPLDSSDDTYLCAPLGENPSCIQICRKHGVKYGYCYAFQCWCEYFGR. Intrachain disulfides connect Cys40–Cys63, Cys49–Cys68, and Cys53–Cys70.

This sequence belongs to the long (3 C-C) scorpion toxin superfamily. In terms of tissue distribution, expressed by the venom gland.

The protein resides in the secreted. Probable neurotoxin that inhibits ion channels. The protein is Toxin-like peptide AaF1CA7 of Androctonus australis (Sahara scorpion).